The sequence spans 206 residues: 2,3-bisphosphoglycerate-dependent phosphoglycerate mutase (206 aa).

Substrate contacts are provided by residues 9-16, 22-23, Arg61, 88-91, Lys99, 115-116, and 159-160; these read RHGQSEWN, TG, ERDY, RR, and GN. The active-site Tele-phosphohistidine intermediate is His10. The active-site Proton donor/acceptor is Glu88.

This sequence belongs to the phosphoglycerate mutase family. BPG-dependent PGAM subfamily. As to quaternary structure, homodimer.

It carries out the reaction (2R)-2-phosphoglycerate = (2R)-3-phosphoglycerate. Its pathway is carbohydrate degradation; glycolysis; pyruvate from D-glyceraldehyde 3-phosphate: step 3/5. Functionally, catalyzes the interconversion of 2-phosphoglycerate and 3-phosphoglycerate. In Chelativorans sp. (strain BNC1), this protein is 2,3-bisphosphoglycerate-dependent phosphoglycerate mutase.